The chain runs to 373 residues: tRNA pseudouridine synthase Pus10 (373 aa).

D197 (nucleophile) is an active-site residue. 2 residues coordinate substrate: Y265 and Y336.

The protein belongs to the pseudouridine synthase Pus10 family.

The enzyme catalyses uridine(54) in tRNA = pseudouridine(54) in tRNA. It carries out the reaction uridine(55) in tRNA = pseudouridine(55) in tRNA. Responsible for synthesis of pseudouridine from uracil-54 and uracil-55 in the psi GC loop of transfer RNAs. This Korarchaeum cryptofilum (strain OPF8) protein is tRNA pseudouridine synthase Pus10.